A 285-amino-acid chain; its full sequence is Nucleotide-binding protein CD630_34000 (285 aa).

8–15 (GLSGSGKS) serves as a coordination point for ATP. 59 to 62 (DIRG) is a binding site for GTP.

It belongs to the RapZ-like family.

Its function is as follows. Displays ATPase and GTPase activities. The chain is Nucleotide-binding protein CD630_34000 from Clostridioides difficile (strain 630) (Peptoclostridium difficile).